A 146-amino-acid polypeptide reads, in one-letter code: Snaclec agkicetin-C subunit beta (146 aa).

Residues 1–23 form the signal peptide; that stretch reads MGRFIFVSFGLLVVFLSLSGTGA. Disulfide bonds link C25–C36, C53–C142, and C119–C134. Residues 32–143 enclose the C-type lectin domain; the sequence is YEGNCYLVVK…CSRTQPFVCK (112 aa).

This sequence belongs to the snaclec family. As to quaternary structure, heterodimer of subunits alpha and beta; disulfide-linked. In terms of tissue distribution, expressed by the venom gland.

It localises to the secreted. Functionally, is a potent glycoprotein Ibalpha (GP1BA) antagonist. Concentration-dependently inhibits botrocetin-, ristocetin- and low dose thrombin-induced platelet aggregation. Inhibits platelet adhesion only through inhibiting the vWF interaction with GP1BA, but has minimal effect on other platelet receptors, such as alpha-IIb/beta-3 (ITGA2B/ITGB3) or alpha-2/beta-1 (ITGA2/ITGB1). Causes an instant severe thrombocytopenia in rats and is not lethal to mice. This chain is Snaclec agkicetin-C subunit beta, found in Deinagkistrodon acutus (Hundred-pace snake).